A 110-amino-acid polypeptide reads, in one-letter code: Hydrogenase maturation factor HypA (110 aa).

Histidine 2 serves as a coordination point for Ni(2+). Positions 70, 73, 86, and 89 each coordinate Zn(2+).

It belongs to the HypA/HybF family.

Its function is as follows. Involved in the maturation of [NiFe] hydrogenases. Required for nickel insertion into the metal center of the hydrogenase. In Geobacter metallireducens (strain ATCC 53774 / DSM 7210 / GS-15), this protein is Hydrogenase maturation factor HypA.